Reading from the N-terminus, the 1460-residue chain is MKEVVVSETPKRIKGLEFSALSAADIVAQSEVEVSTRDLFDLEKDRAPKANGALDPKMGVSSSSLECATCHGNLASCHGHFGHLKLALPVFHIGYFKATIQILQGICKNCSAILLSETDKRQFLHELRRPGVDNLRRMGILKKILDQCKKQRRCLHCGALNGVVKKAAAGAGSAALKIIHDTFRWVGKKSAPEKDIWVGEWKEVLAHNPELERYVKRCMDDLNPLKTLNLFKQIKSADCELLGIDATVPSGRPETYIWRYLPAPPVCIRPSVMMQDSPASNEDDLTVKLTEIVWTSSLIKAGLDKGISINNMMEHWDYLQLTVAMYINSDSVNPAMLPGSSNGGGKVKPIRGFCQRLKGKQGRFRGNLSGKRVDFSGRTVISPDPNLSIDEVAVPDRVAKVLTYPEKVTRYNRHKLQELIVNGPNVHPGANYLLKRNEDARRNLRYGDRMKLAKNLQIGDVVERHLEDGDVVLFNRQPSLHRLSILSHYAKIRPWRTFRLNECVCTPYNADFDGDEMNLHVPQTEEARAEAINLMGVKNNLLTPKSGEPIIAATQDFITGSYLISHKDSFYDRATLTQLLSMMSDGIEHFDIPPPAIMKPYYLWTGKQVFSLLIKPNHNSPVVINLDAKNKVFVPPKSKSLPNEMSQNDGFVIIRGSQILSGVMDKSVLGDGKKHSVFYTILRDYGPQEAANAMNRMAKLCARFLGNRGFSIGINDVTPADDLKQKKEELVEIAYHKCDELITLFNKGELETQPGCNEEQTLEAKIGGLLSKVREEVGDVCINELDNWNAPLIMATCGSKGSTLNVSQMVAVVGQQIISGNRVPDGFQDRSLPHFPKNSKTPQSKGFVRNSFFSGLSPPEFLFHAISGREGLVDTAVKTAETGYMSRRLMKSLEDLSCQYDNTVRTSANGIVQFTYGGDGLDPLEMEGNAQPVNFNRSWDHAYNITFNNQDKGLLPYAIMETANEILGPLEERLVRYDNSGCLVKREDLNKAEYVDQYDAERDFYHSLREYINGKATALANLRKSRGMLGLLEPPAKELQGIDPDETVPDNVKTSVSQLYRISEKSVRKFLEIALFKYRKARLEPGTAIGAIGAQSIGEPGTQMTLKTFHFAGVASMNVTLGVPRIKEIINASKVISTPIINAVLVNDNDERAARVVKGRVEKTLLSDVAFYVQDVYKDNLSFIQVRIDLGTIDKLQLELTIEDIAVAITRASKLKIQASDVNIIGKDRIAINVFPEGYKAKSISTSAKEPSENDVFYRMQQLRRALPDVVVKGLPDISRAVINIRDDGKRELLVEGYGLRDVMCTDGVIGSRTTTNHVLEVFSVLGIEAARYSIIREINYTMSNHGMSVDPRHIQLLGDVMTYKGEVLGITRFGLSKMRDSVLQLASFEKTTDHLFDAAFYMKKDAVEGVSECIILGQTMSIGTGSFKVVKGTNISEKDLVPKRCLFESLSNEAALKAN.

The Zn(2+) site is built by Cys67, Cys70, Cys77, His80, Cys107, Cys110, and Cys154. Asp511, Asp513, and Asp515 together coordinate Mg(2+). A bridging helix region spans residues 858-870 (PPEFLFHAISGRE).

This sequence belongs to the RNA polymerase beta' chain family. As to quaternary structure, component of the RNA polymerase III (Pol III) complex consisting of 17 subunits.

The protein localises to the nucleus. It catalyses the reaction RNA(n) + a ribonucleoside 5'-triphosphate = RNA(n+1) + diphosphate. In terms of biological role, DNA-dependent RNA polymerase catalyzes the transcription of DNA into RNA using the four ribonucleoside triphosphates as substrates. Largest and catalytic core component of RNA polymerase III which synthesizes small RNAs, such as 5S rRNA and tRNAs. Forms the polymerase active center together with the second largest subunit. A single-stranded DNA template strand of the promoter is positioned within the central active site cleft of Pol III. A bridging helix emanates from RPC1 and crosses the cleft near the catalytic site and is thought to promote translocation of Pol III by acting as a ratchet that moves the RNA-DNA hybrid through the active site by switching from straight to bent conformations at each step of nucleotide addition. The sequence is that of DNA-directed RNA polymerase III subunit RPC1 (RPO31) from Saccharomyces cerevisiae (strain ATCC 204508 / S288c) (Baker's yeast).